A 105-amino-acid polypeptide reads, in one-letter code: Flagellar transcriptional regulator FlhD (105 aa).

It belongs to the FlhD family. Homodimer; disulfide-linked. Forms a heterohexamer composed of two FlhC and four FlhD subunits. Each FlhC binds a FlhD dimer, forming a heterotrimer, and a hexamer assembles by dimerization of two heterotrimers.

The protein resides in the cytoplasm. Its function is as follows. Functions in complex with FlhC as a master transcriptional regulator that regulates transcription of several flagellar and non-flagellar operons by binding to their promoter region. Activates expression of class 2 flagellar genes, including fliA, which is a flagellum-specific sigma factor that turns on the class 3 genes. Also regulates genes whose products function in a variety of physiological pathways. The polypeptide is Flagellar transcriptional regulator FlhD (Nitrosomonas eutropha (strain DSM 101675 / C91 / Nm57)).